The chain runs to 364 residues: Probable dual-specificity RNA methyltransferase RlmN (364 aa).

E106 serves as the catalytic Proton acceptor. A Radical SAM core domain is found at 112–350 (YPQRNTVCIS…SCTVRDTRGR (239 aa)). C119 and C356 are disulfide-bonded. [4Fe-4S] cluster is bound by residues C126, C130, and C133. S-adenosyl-L-methionine is bound by residues 177–178 (GE), S211, 234–236 (SLH), and N313. C356 acts as the S-methylcysteine intermediate in catalysis.

It belongs to the radical SAM superfamily. RlmN family. Requires [4Fe-4S] cluster as cofactor.

It is found in the cytoplasm. The enzyme catalyses adenosine(2503) in 23S rRNA + 2 reduced [2Fe-2S]-[ferredoxin] + 2 S-adenosyl-L-methionine = 2-methyladenosine(2503) in 23S rRNA + 5'-deoxyadenosine + L-methionine + 2 oxidized [2Fe-2S]-[ferredoxin] + S-adenosyl-L-homocysteine. The catalysed reaction is adenosine(37) in tRNA + 2 reduced [2Fe-2S]-[ferredoxin] + 2 S-adenosyl-L-methionine = 2-methyladenosine(37) in tRNA + 5'-deoxyadenosine + L-methionine + 2 oxidized [2Fe-2S]-[ferredoxin] + S-adenosyl-L-homocysteine. Functionally, specifically methylates position 2 of adenine 2503 in 23S rRNA and position 2 of adenine 37 in tRNAs. The protein is Probable dual-specificity RNA methyltransferase RlmN of Mycobacterium marinum (strain ATCC BAA-535 / M).